A 113-amino-acid polypeptide reads, in one-letter code: Ig kappa chain V-II region 7S34.1 (113 aa).

The segment at 1–23 (DIVMTQTAPSALVTPGESVSISC) is framework-1. Residues cysteine 23 and cysteine 93 are joined by a disulfide bond. The interval 24-39 (RSSKSLLHSNGNTYLY) is complementarity-determining-1. The interval 40 to 54 (WFLQRPGQCPQLLIY) is framework-2. Residues 55–61 (RMSNLAS) are complementarity-determining-2. Residues 62-93 (GVPDRFSGSGSGTAFTLRISRVEAEDVGVYYC) are framework-3. Residues 94–102 (MQQREYPYT) are complementarity-determining-3. The segment at 103–112 (FGGGTKLEIK) is framework-4.

The sequence is that of Ig kappa chain V-II region 7S34.1 from Mus musculus (Mouse).